A 284-amino-acid polypeptide reads, in one-letter code: MAQLPASMRRKRAAITSIHDKPPTRKQKLANAGGWVLLVIAFVVLAVGIYGLYKVITDATVAKLEVVGSTSSVETQQVMQHVAPIIKANYFTSDLEQIRDKTLEISWVDRVVVSRAWPNGIRVRVMPRHAIARWGTGRLLSDGGDVFSEAEPTIHPELPLLHGPVSQSKMMMRRYNEINQLFHPANLRLKELYLTERMTWFMQFDSGLRIIVDQDQTMNKLQRLSHLAQSDLKPVWSKISAIDLRYRNGLSIQWKNATPPKIVNGQFVVTIDDTSIAGGTKAKP.

The Cytoplasmic portion of the chain corresponds to 1-31; that stretch reads MAQLPASMRRKRAAITSIHDKPPTRKQKLAN. The chain crosses the membrane as a helical span at residues 32 to 52; it reads AGGWVLLVIAFVVLAVGIYGL. Over 53–284 the chain is Periplasmic; sequence YKVITDATVA…SIAGGTKAKP (232 aa). The POTRA domain maps to 59–128; the sequence is ATVAKLEVVG…NGIRVRVMPR (70 aa).

It belongs to the FtsQ/DivIB family. FtsQ subfamily. In terms of assembly, part of a complex composed of FtsB, FtsL and FtsQ.

The protein resides in the cell inner membrane. Its function is as follows. Essential cell division protein. May link together the upstream cell division proteins, which are predominantly cytoplasmic, with the downstream cell division proteins, which are predominantly periplasmic. May control correct divisome assembly. This Acinetobacter oleivorans (strain JCM 16667 / KCTC 23045 / DR1) protein is Cell division protein FtsQ.